A 285-amino-acid polypeptide reads, in one-letter code: (3S)-malyl-CoA thioesterase (285 aa).

Positions 70 and 122 each coordinate substrate. Mg(2+)-binding residues include Glu122 and Asp148.

The protein belongs to the HpcH/HpaI aldolase family. Homodimer or homotrimer. The cofactor is Mg(2+).

It carries out the reaction (S)-malyl-CoA + H2O = (S)-malate + CoA + H(+). Functionally, catalyzes the hydrolysis of (3S)-malyl-CoA to (3S)-malate and free CoA. Inactive towards beta-methylmalyl-CoA and other CoA esters. This Cereibacter sphaeroides (strain ATCC 17029 / ATH 2.4.9) (Rhodobacter sphaeroides) protein is (3S)-malyl-CoA thioesterase.